Consider the following 1005-residue polypeptide: DNA polymerase (1005 aa).

The protein belongs to the DNA polymerase type-B family. As to quaternary structure, interacts with OPG148. Component of the Uracil-DNA glycosylase(UDG)-OPG148-polymerase complex; OPG148 and OPG116/UDG form a heterodimeric processivity factor that associates with OPG071 to form the processive polymerase holoenzyme.

It carries out the reaction DNA(n) + a 2'-deoxyribonucleoside 5'-triphosphate = DNA(n+1) + diphosphate. Its function is as follows. Catalyzes DNA synthesis. Acquires processivity by associating with a heterodimeric processivity factor comprised of the viral OPG148 and OPG116 proteins, thereby forming the DNA polymerase holoenzyme. Displays 3'- to 5' exonuclease activity. Might participate in viral DNA recombination. Does not perform OPG116/D4synthesis across an abasic site. The polypeptide is DNA polymerase (OPG071) (Variola virus (isolate Human/India/Ind3/1967) (VARV)).